The following is a 303-amino-acid chain: NAD kinase (303 aa).

Asp85 (proton acceptor) is an active-site residue. NAD(+) contacts are provided by residues 85–86, 159–160, Arg187, Asp189, 200–205, Ala224, and Gln258; these read DG, ND, and TAYALS.

This sequence belongs to the NAD kinase family. It depends on a divalent metal cation as a cofactor.

The protein localises to the cytoplasm. The enzyme catalyses NAD(+) + ATP = ADP + NADP(+) + H(+). Involved in the regulation of the intracellular balance of NAD and NADP, and is a key enzyme in the biosynthesis of NADP. Catalyzes specifically the phosphorylation on 2'-hydroxyl of the adenosine moiety of NAD to yield NADP. The protein is NAD kinase of Variovorax paradoxus (strain S110).